Here is a 119-residue protein sequence, read N- to C-terminus: uncharacterized protein (119 aa).

Residue cysteine 13 is part of the active site.

Belongs to the ArsC family.

This is an uncharacterized protein from Escherichia coli (strain K12).